Reading from the N-terminus, the 188-residue chain is Cell division protein SepF (188 aa).

Belongs to the SepF family. Homodimer. Interacts with FtsZ.

Its subcellular location is the cytoplasm. Functionally, cell division protein that is part of the divisome complex and is recruited early to the Z-ring. Probably stimulates Z-ring formation, perhaps through the cross-linking of FtsZ protofilaments. Its function overlaps with FtsA. The sequence is that of Cell division protein SepF from Synechococcus sp. (strain CC9605).